Consider the following 198-residue polypeptide: ATP synthase protein MI25 (198 aa).

Residues 29-49 (ISIYNEEMIVALCFIGFIIFS) traverse the membrane as a helical segment.

It belongs to the ATPase protein MI25 family. In terms of assembly, F-type ATPases have 2 components, CF(1) - the catalytic core - and CF(0) - the membrane proton channel. CF(1) has five subunits: alpha(3), beta(3), gamma(1), delta(1), epsilon(1). CF(0) has three main subunits: a, b and c.

The protein localises to the mitochondrion membrane. Functionally, this is one of the chains of the nonenzymatic component (CF(0) subunit) of the mitochondrial ATPase complex. This is ATP synthase protein MI25 from Nicotiana tabacum (Common tobacco).